We begin with the raw amino-acid sequence, 349 residues long: MIEFDNLTYLHGKPQGTGLLKANPEDFVVVEDLGFEPDGEGEHILVRILKNGCNTRFVADALAKFLKIHAREVSFAGQKDKHAVTEQWFCARVPGKEMPDLSAFQLEGCQVLEYARHKRKLRLGALKGNAFTLVLRDVSNRDDVEQRLIDICVKGVPNYFGAQRFGIGGSNLQGALRWAQTNTPVRDRNKRSFWLSAARSALFNQIVAERLKKADVNQVVDGDALQLAGRGSWFVATTEELAELQRRVNDKELMITAALPGSGEWGTQREALAFEQAAVAEETELQTLLVREKVEAARRAMLLYPQQLSWNWWDDVTVEIRFWLPAGSFATSVVRELINTTGEYAHIAE.

A substrate-binding site is contributed by F27. D80 acts as the Nucleophile in catalysis. Position 129 (N129) interacts with substrate. The TRUD domain maps to 155–303; the sequence is GVPNYFGAQR…VEAARRAMLL (149 aa). F329 provides a ligand contact to substrate.

Belongs to the pseudouridine synthase TruD family.

It carries out the reaction uridine(13) in tRNA = pseudouridine(13) in tRNA. Its function is as follows. Responsible for synthesis of pseudouridine from uracil-13 in transfer RNAs. The sequence is that of tRNA pseudouridine synthase D from Escherichia fergusonii (strain ATCC 35469 / DSM 13698 / CCUG 18766 / IAM 14443 / JCM 21226 / LMG 7866 / NBRC 102419 / NCTC 12128 / CDC 0568-73).